The following is a 296-amino-acid chain: Ribosomal RNA small subunit methyltransferase A (296 aa).

N32, L34, G59, E80, D105, and N130 together coordinate S-adenosyl-L-methionine.

This sequence belongs to the class I-like SAM-binding methyltransferase superfamily. rRNA adenine N(6)-methyltransferase family. RsmA subfamily.

It is found in the cytoplasm. The catalysed reaction is adenosine(1518)/adenosine(1519) in 16S rRNA + 4 S-adenosyl-L-methionine = N(6)-dimethyladenosine(1518)/N(6)-dimethyladenosine(1519) in 16S rRNA + 4 S-adenosyl-L-homocysteine + 4 H(+). In terms of biological role, specifically dimethylates two adjacent adenosines (A1518 and A1519) in the loop of a conserved hairpin near the 3'-end of 16S rRNA in the 30S particle. May play a critical role in biogenesis of 30S subunits. This chain is Ribosomal RNA small subunit methyltransferase A, found in Lactiplantibacillus plantarum (strain ATCC BAA-793 / NCIMB 8826 / WCFS1) (Lactobacillus plantarum).